Here is a 301-residue protein sequence, read N- to C-terminus: MGQTSKHKSGFVALVGRPNVGKSTLMNRLIGQKVAITSAKPQTTRNKISGIYTEDDMQVVFVDTPGIFKSHSDLDEYMDKASLSSLKDVDLVMFMVDAKEAGKGEEYVAGLLKDLDIPVFLVINKIDQVHPNELLPIIDSYQAVGKFAEFLPISARQGNGVDDLLKTLKDYLPEGPQYYASDEITDRPEYFVVAEMIREQILRLTDQEVPHSTAVWVDQMNQRINGKLQIDATIFVEKDGQKRIIIGQRGSMIKQIGMRSRKEIENLLGEKVNLKLWVKVRRDWRQDPAFLKSIGYDKKEL.

The 167-residue stretch at 8–174 (KSGFVALVGR…LKTLKDYLPE (167 aa)) folds into the Era-type G domain. The G1 stretch occupies residues 16 to 23 (GRPNVGKS). Residue 16–23 (GRPNVGKS) participates in GTP binding. A G2 region spans residues 42 to 46 (QTTRN). Positions 63–66 (DTPG) are G3. Residues 63–67 (DTPGI) and 124–127 (NKID) each bind GTP. Residues 124-127 (NKID) are G4. The G5 stretch occupies residues 153 to 155 (ISA). Residues 197–282 (IREQILRLTD…NLKLWVKVRR (86 aa)) enclose the KH type-2 domain.

It belongs to the TRAFAC class TrmE-Era-EngA-EngB-Septin-like GTPase superfamily. Era GTPase family. Monomer.

Its subcellular location is the cytoplasm. It localises to the cell membrane. An essential GTPase that binds both GDP and GTP, with rapid nucleotide exchange. Plays a role in 16S rRNA processing and 30S ribosomal subunit biogenesis and possibly also in cell cycle regulation and energy metabolism. The protein is GTPase Era of Lactobacillus delbrueckii subsp. bulgaricus (strain ATCC 11842 / DSM 20081 / BCRC 10696 / JCM 1002 / NBRC 13953 / NCIMB 11778 / NCTC 12712 / WDCM 00102 / Lb 14).